A 500-amino-acid chain; its full sequence is E3 ubiquitin-protein ligase TRIM4 (500 aa).

The RING-type zinc-finger motif lies at 12–53 (CPICLDYFQDPVSIECGHNFCRGCLHRNWAPGGGPFPCPECR). The segment at 82 to 123 (VPPGLCGRHWEPLRLFCEDDQRPVCLVCRESQEHQTHAMAPI) adopts a B box-type zinc-finger fold. Residues cysteine 87, histidine 90, cysteine 109, and histidine 115 each coordinate Zn(2+). The stretch at 212 to 253 (EEEDLFLQRLNKEEEETKKKLNENTLKLNQTIASLKKLILEV) forms a coiled coil. In terms of domain architecture, B30.2/SPRY spans 288–500 (KVKTVCQIPL…LVIPPVTDRK (213 aa)).

This sequence belongs to the TRIM/RBCC family. As to quaternary structure, homotrimer.

It localises to the cytoplasm. The catalysed reaction is S-ubiquitinyl-[E2 ubiquitin-conjugating enzyme]-L-cysteine + [acceptor protein]-L-lysine = [E2 ubiquitin-conjugating enzyme]-L-cysteine + N(6)-ubiquitinyl-[acceptor protein]-L-lysine.. Its pathway is protein modification; protein ubiquitination. Its function is as follows. E3 ubiquitin-protein ligase. Mediates 'Lys-63'-linked polyubiquitination of the innate immune receptor RIGI, this linkage doesn't lead to proteasomal degradation but seems to enhance IFN induction. The protein is E3 ubiquitin-protein ligase TRIM4 (TRIM4) of Homo sapiens (Human).